The following is a 356-amino-acid chain: S-adenosylmethionine:tRNA ribosyltransferase-isomerase (356 aa).

This sequence belongs to the QueA family. As to quaternary structure, monomer.

The protein resides in the cytoplasm. The enzyme catalyses 7-aminomethyl-7-carbaguanosine(34) in tRNA + S-adenosyl-L-methionine = epoxyqueuosine(34) in tRNA + adenine + L-methionine + 2 H(+). Its pathway is tRNA modification; tRNA-queuosine biosynthesis. Functionally, transfers and isomerizes the ribose moiety from AdoMet to the 7-aminomethyl group of 7-deazaguanine (preQ1-tRNA) to give epoxyqueuosine (oQ-tRNA). In Shigella boydii serotype 18 (strain CDC 3083-94 / BS512), this protein is S-adenosylmethionine:tRNA ribosyltransferase-isomerase.